An 80-amino-acid polypeptide reads, in one-letter code: Dermaseptin-A5 (80 aa).

The first 22 residues, 1 to 22, serve as a signal peptide directing secretion; the sequence is MAFLKKSLFLVLFLGLVSLSIC. A propeptide spanning residues 23 to 43 is cleaved from the precursor; that stretch reads EEEKRENEDEEEQEDDEQSEM. Residues 24 to 45 form a disordered region; that stretch reads EEKRENEDEEEQEDDEQSEMKR. The segment covering 30–40 has biased composition (acidic residues); sequence EDEEEQEDDEQ. Residue Val-77 is modified to Valine amide. Positions 79-80 are excised as a propeptide; sequence EQ.

It belongs to the frog skin active peptide (FSAP) family. Dermaseptin subfamily. As to expression, expressed by the skin glands.

The protein localises to the secreted. Its function is as follows. Possesses a potent antimicrobial activity against Gram-positive and Gram-negative bacteria. Probably acts by disturbing membrane functions with its amphipathic structure. The polypeptide is Dermaseptin-A5 (Agalychnis annae (Blue-sided leaf frog)).